A 428-amino-acid polypeptide reads, in one-letter code: Glutamate-1-semialdehyde 2,1-aminomutase (428 aa).

Lys265 carries the N6-(pyridoxal phosphate)lysine modification.

Belongs to the class-III pyridoxal-phosphate-dependent aminotransferase family. HemL subfamily. Homodimer. Pyridoxal 5'-phosphate is required as a cofactor.

The protein localises to the cytoplasm. It carries out the reaction (S)-4-amino-5-oxopentanoate = 5-aminolevulinate. The protein operates within porphyrin-containing compound metabolism; protoporphyrin-IX biosynthesis; 5-aminolevulinate from L-glutamyl-tRNA(Glu): step 2/2. This chain is Glutamate-1-semialdehyde 2,1-aminomutase, found in Shewanella sediminis (strain HAW-EB3).